A 299-amino-acid polypeptide reads, in one-letter code: Nucleotide-binding protein AFE_3021 (299 aa).

An ATP-binding site is contributed by 11-18 (GLSGSGKS). 62-65 (DVRN) is a GTP binding site.

The protein belongs to the RapZ-like family.

Functionally, displays ATPase and GTPase activities. This Acidithiobacillus ferrooxidans (strain ATCC 23270 / DSM 14882 / CIP 104768 / NCIMB 8455) (Ferrobacillus ferrooxidans (strain ATCC 23270)) protein is Nucleotide-binding protein AFE_3021.